A 426-amino-acid chain; its full sequence is Phosphomethylpyrimidine synthase (426 aa).

Substrate contacts are provided by residues N66, M95, Y124, H163, 185–187 (SRG), 226–229 (DGLR), and E265. Zn(2+) is bound at residue H269. Y292 provides a ligand contact to substrate. A Zn(2+)-binding site is contributed by H333. [4Fe-4S] cluster-binding residues include C407, C410, and C414.

The protein belongs to the ThiC family. It depends on [4Fe-4S] cluster as a cofactor.

The catalysed reaction is 5-amino-1-(5-phospho-beta-D-ribosyl)imidazole + S-adenosyl-L-methionine = 4-amino-2-methyl-5-(phosphooxymethyl)pyrimidine + CO + 5'-deoxyadenosine + formate + L-methionine + 3 H(+). It functions in the pathway cofactor biosynthesis; thiamine diphosphate biosynthesis. In terms of biological role, catalyzes the synthesis of the hydroxymethylpyrimidine phosphate (HMP-P) moiety of thiamine from aminoimidazole ribotide (AIR) in a radical S-adenosyl-L-methionine (SAM)-dependent reaction. The sequence is that of Phosphomethylpyrimidine synthase from Thermococcus gammatolerans (strain DSM 15229 / JCM 11827 / EJ3).